Consider the following 156-residue polypeptide: Probable succinate transporter subunit YjjB (156 aa).

A run of 4 helical transmembrane segments spans residues 7–27 (WALL…AMVF), 54–74 (FGMN…IIGI), 86–106 (VFTV…TAMI), and 128–148 (FLKA…PGIW).

The protein belongs to the ThrE exporter (TC 2.A.79) family. In terms of assembly, the transporter is composed of YjjB and YjjP.

The protein resides in the cell inner membrane. Involved in succinate export with YjjP. Both proteins are required for export. This Pectobacterium atrosepticum (strain SCRI 1043 / ATCC BAA-672) (Erwinia carotovora subsp. atroseptica) protein is Probable succinate transporter subunit YjjB.